The chain runs to 300 residues: Protoheme IX farnesyltransferase (300 aa).

The next 9 helical transmembrane spans lie at 24–44, 48–68, 94–114, 118–138, 146–166, 172–192, 217–237, 239–259, and 278–298; these read VTQL…PGMV, VLLG…AINC, LQIL…LYTF, LTIW…TLLL, IVIG…AVTG, AWIL…VLAL, LHIL…FISG, SGAV…AYAW, and IVYL…RPVI.

The protein belongs to the UbiA prenyltransferase family. Protoheme IX farnesyltransferase subfamily.

The protein localises to the cell inner membrane. The enzyme catalyses heme b + (2E,6E)-farnesyl diphosphate + H2O = Fe(II)-heme o + diphosphate. Its pathway is porphyrin-containing compound metabolism; heme O biosynthesis; heme O from protoheme: step 1/1. In terms of biological role, converts heme B (protoheme IX) to heme O by substitution of the vinyl group on carbon 2 of heme B porphyrin ring with a hydroxyethyl farnesyl side group. This is Protoheme IX farnesyltransferase from Burkholderia mallei (strain NCTC 10247).